Consider the following 182-residue polypeptide: Large ribosomal subunit protein uL10 (182 aa).

This sequence belongs to the universal ribosomal protein uL10 family. Part of the ribosomal stalk of the 50S ribosomal subunit. The N-terminus interacts with L11 and the large rRNA to form the base of the stalk. The C-terminus forms an elongated spine to which L12 dimers bind in a sequential fashion forming a multimeric L10(L12)X complex.

Forms part of the ribosomal stalk, playing a central role in the interaction of the ribosome with GTP-bound translation factors. This Janthinobacterium sp. (strain Marseille) (Minibacterium massiliensis) protein is Large ribosomal subunit protein uL10.